Reading from the N-terminus, the 689-residue chain is Probable serine/threonine-protein kinase abkC (689 aa).

The tract at residues 42-79 (NNSGNENYKNFNYNYKNKNNYNNNNNNNNSNSSSNNNG) is disordered. A Protein kinase domain is found at 257 to 689 (WFDEEPMASG…NNKNNNEKNK (433 aa)). ATP contacts are provided by residues 263 to 271 (MASGSVAQV) and Lys285. The Proton acceptor role is filled by Asp417. The tract at residues 652 to 689 (KQLNNDNNNNNNNNNNNKNNNDNNNKNNNNKNNNEKNK) is disordered. Residues 655–683 (NNDNNNNNNNNNNNKNNNDNNNKNNNNKN) show a composition bias toward low complexity.

This sequence belongs to the protein kinase superfamily. ADCK protein kinase family.

The polypeptide is Probable serine/threonine-protein kinase abkC (abkC) (Dictyostelium discoideum (Social amoeba)).